The sequence spans 166 residues: Shikimate kinase (166 aa).

11–16 (GSGKST) contributes to the ATP binding site. A Mg(2+)-binding site is contributed by Ser-15. Substrate-binding residues include Asp-33, Arg-57, and Gly-79. An ATP-binding site is contributed by Arg-117. Position 134 (Arg-134) interacts with substrate.

It belongs to the shikimate kinase family. In terms of assembly, monomer. Requires Mg(2+) as cofactor.

It localises to the cytoplasm. The enzyme catalyses shikimate + ATP = 3-phosphoshikimate + ADP + H(+). The protein operates within metabolic intermediate biosynthesis; chorismate biosynthesis; chorismate from D-erythrose 4-phosphate and phosphoenolpyruvate: step 5/7. Catalyzes the specific phosphorylation of the 3-hydroxyl group of shikimic acid using ATP as a cosubstrate. In Sulfurihydrogenibium sp. (strain YO3AOP1), this protein is Shikimate kinase.